A 62-amino-acid chain; its full sequence is Chromatin protein Cren7 (62 aa).

The protein belongs to the Cren7 family. Monomer. Post-translationally, methylated at multiple sites, to varying extents.

It localises to the chromosome. The protein resides in the cytoplasm. Its function is as follows. A chromatin protein, binds double-stranded DNA without sequence specificity. Constrains negative DNA supercoils. The polypeptide is Chromatin protein Cren7 (Staphylothermus marinus (strain ATCC 43588 / DSM 3639 / JCM 9404 / F1)).